Consider the following 485-residue polypeptide: Ulvan lyase (485 aa).

Positions 1–33 (MIRNDTMLKGQFVLKKTQIALSAALMGSVLLTG) are cleaved as a signal peptide. Cys34 carries the N-palmitoyl cysteine lipid modification. Cys34 is lipidated: S-diacylglycerol cysteine. Residues Asn64 and Asn126 each coordinate substrate. Residues 108 to 128 (FKAGTSELGRRDGGKKFDNHG) are disordered. The span at 115 to 128 (LGRRDGGKKFDNHG) shows a compositional bias: basic and acidic residues. His127 serves as the catalytic Proton donor. Positions 129 and 147 each coordinate substrate. The Proton acceptor role is filled by Tyr192. The substrate site is built by Arg208, His212, and Tyr250. Position 212 (His212) interacts with Zn(2+). His268, Cys270, and His282 together coordinate Zn(2+). His282 contributes to the substrate binding site.

This sequence belongs to the polysaccharide lyase 25 family.

It is found in the cell membrane. Functionally, ulvan lyase involved in ulvan degradation. Ulvan is the main polysaccharide component of the Ulvales (green seaweed) cell wall. It is composed of disaccharide building blocks comprising 3-sulfated rhamnose (Rha3S) linked to D-glucuronic acid (GlcA), L-iduronic acid (IduA), or D-xylose (Xyl). Ulvan lyase catalyzes the endolytic cleavage of the glycosidic bond between Rha3S and the uronic acids GlcA or IduA, producing oligosaccharides that have unsaturated 4-deoxy-L-threo-hex-4-enopyranosiduronic acid (deltaUA) at the non-reducing end. This results eventually in the degradation of the ulvan polysaccharide into deltaUA-Rha3S disaccharides and deltaUA-Rha3S-Xyl-Rha3S tetrasaccharides. The polypeptide is Ulvan lyase (Alteromonas sp. (strain LOR)).